Here is a 246-residue protein sequence, read N- to C-terminus: DNA repair protein RecO (246 aa).

The protein belongs to the RecO family.

Functionally, involved in DNA repair and RecF pathway recombination. The sequence is that of DNA repair protein RecO from Methylorubrum extorquens (strain PA1) (Methylobacterium extorquens).